Here is an 872-residue protein sequence, read N- to C-terminus: Leucine--tRNA ligase (872 aa).

The short motif at 42–52 (PYPSGSLHMGH) is the 'HIGH' region element. Positions 634–638 (TMSKS) match the 'KMSKS' region motif. Lys637 contributes to the ATP binding site.

It belongs to the class-I aminoacyl-tRNA synthetase family.

It localises to the cytoplasm. It carries out the reaction tRNA(Leu) + L-leucine + ATP = L-leucyl-tRNA(Leu) + AMP + diphosphate. In Trichormus variabilis (strain ATCC 29413 / PCC 7937) (Anabaena variabilis), this protein is Leucine--tRNA ligase.